Consider the following 78-residue polypeptide: Acyl carrier protein (78 aa).

The Carrier domain occupies 1 to 76; that stretch reads MALFEDIQAV…DVVKYIEDNK (76 aa). Residue Ser36 is modified to O-(pantetheine 4'-phosphoryl)serine.

This sequence belongs to the acyl carrier protein (ACP) family. In terms of processing, 4'-phosphopantetheine is transferred from CoA to a specific serine of apo-ACP by AcpS. This modification is essential for activity because fatty acids are bound in thioester linkage to the sulfhydryl of the prosthetic group.

Its subcellular location is the cytoplasm. The protein operates within lipid metabolism; fatty acid biosynthesis. In terms of biological role, carrier of the growing fatty acid chain in fatty acid biosynthesis. The chain is Acyl carrier protein from Helicobacter pylori (strain ATCC 700392 / 26695) (Campylobacter pylori).